Reading from the N-terminus, the 98-residue chain is Bombyxin E-1 (98 aa).

Positions 1 to 19 are cleaved as a signal peptide; it reads MNRPVFLVLLLTGFLCIAA. A Pyrrolidone carboxylic acid modification is found at Q20. Disulfide bonds link C29–C85, C41–C98, and C84–C89. Residues 50 to 75 constitute a propeptide, c peptide like; the sequence is SESSLASYSSRGWPWLPTPNFNKRAI.

The protein belongs to the insulin family. Heterodimer of a B chain and an A chain linked by two disulfide bonds.

The protein localises to the secreted. In terms of biological role, PTTH is a brain peptide responsible for activation of prothoracic glands to produce ecdysone in insects. This is Bombyxin E-1 (BBXE1) from Bombyx mori (Silk moth).